Here is a 111-residue protein sequence, read N- to C-terminus: MKGRQGERVRLYVRGTVLGYKRSKSNQYPNTSLIQIEGVNTQEEVNWYKGKRLAYIYKAKTKKNGSHYRCIWGKVTRPHGNSGVVRSKFTSNLPPKSMGARVRVFMYPSNI.

It belongs to the eukaryotic ribosomal protein eL33 family.

The sequence is that of Large ribosomal subunit protein eL33z (RPL35AB) from Arabidopsis thaliana (Mouse-ear cress).